Reading from the N-terminus, the 385-residue chain is MRNPDIGIDDLTALFIADTPLIDVRAPVEFTQGSLPGAVNLPILNDEERALVGTTYKQQGSEAAIKLGYEMVSGSVKQNRLQQWLDFIHQHPRAILYCFRGGKRSQITQQWLRDTGIDSPLITGGYKRARQFLISTIDRFSEHRKLLVITGPTGSGKTRLIHDISNSHPVLDIEALARHRGSAFGGMSVPQPSQIDFENHLAVNLLKLEQNNLSEPVIVEDESRHTGKVYLPDSFFHHLRNSEIIWVDEPLATRVDNIFEDYILTTPIGQAQRIRQAIPPLASTVETREILRQQARQLFDKYAGALQAISKKLGGDRFQEVSEDLENARSDFENKNEIQSNKIWIEKLVRYYYDPLYLGSLQRRRVNPCFKGSGQAVMDYLQARK.

Residues Phe-15–Asp-138 form the Rhodanese domain. Catalysis depends on Cys-98, which acts as the S-selanylcysteine intermediate.

Belongs to the SelU family. Monomer.

It carries out the reaction 5-methylaminomethyl-2-thiouridine(34) in tRNA + selenophosphate + (2E)-geranyl diphosphate + H2O + H(+) = 5-methylaminomethyl-2-selenouridine(34) in tRNA + (2E)-thiogeraniol + phosphate + diphosphate. The catalysed reaction is 5-methylaminomethyl-2-thiouridine(34) in tRNA + (2E)-geranyl diphosphate = 5-methylaminomethyl-S-(2E)-geranyl-thiouridine(34) in tRNA + diphosphate. The enzyme catalyses 5-methylaminomethyl-S-(2E)-geranyl-thiouridine(34) in tRNA + selenophosphate + H(+) = 5-methylaminomethyl-2-(Se-phospho)selenouridine(34) in tRNA + (2E)-thiogeraniol. It catalyses the reaction 5-methylaminomethyl-2-(Se-phospho)selenouridine(34) in tRNA + H2O = 5-methylaminomethyl-2-selenouridine(34) in tRNA + phosphate. In terms of biological role, involved in the post-transcriptional modification of the uridine at the wobble position (U34) of tRNA(Lys), tRNA(Glu) and tRNA(Gln). Catalyzes the conversion of 2-thiouridine (S2U-RNA) to 2-selenouridine (Se2U-RNA). Acts in a two-step process involving geranylation of 2-thiouridine (S2U) to S-geranyl-2-thiouridine (geS2U) and subsequent selenation of the latter derivative to 2-selenouridine (Se2U) in the tRNA chain. This is tRNA 2-selenouridine synthase from Nitrosomonas europaea (strain ATCC 19718 / CIP 103999 / KCTC 2705 / NBRC 14298).